A 198-amino-acid chain; its full sequence is Proteasome subunit beta 2 (198 aa).

Positions 1–4 (MVLA) are cleaved as a propeptide — removed in mature form; by autocatalysis. The active-site Nucleophile is the Thr-5.

The protein belongs to the peptidase T1B family. As to quaternary structure, the 20S proteasome core is composed of 14 alpha and 14 beta subunits that assemble into four stacked heptameric rings, resulting in a barrel-shaped structure. The two inner rings, each composed of seven catalytic beta subunits, are sandwiched by two outer rings, each composed of seven alpha subunits. The catalytic chamber with the active sites is on the inside of the barrel. Has a gated structure, the ends of the cylinder being occluded by the N-termini of the alpha-subunits. Is capped at one or both ends by the proteasome regulatory ATPase, PAN.

Its subcellular location is the cytoplasm. The catalysed reaction is Cleavage of peptide bonds with very broad specificity.. With respect to regulation, the formation of the proteasomal ATPase PAN-20S proteasome complex, via the docking of the C-termini of PAN into the intersubunit pockets in the alpha-rings, triggers opening of the gate for substrate entry. Interconversion between the open-gate and close-gate conformations leads to a dynamic regulation of the 20S proteasome proteolysis activity. Its function is as follows. Component of the proteasome core, a large protease complex with broad specificity involved in protein degradation. The chain is Proteasome subunit beta 2 from Korarchaeum cryptofilum (strain OPF8).